Consider the following 1011-residue polypeptide: Poly [ADP-ribose] polymerase 1 (1011 aa).

2 PARP-type zinc fingers span residues 9 to 91 and 113 to 203; these read YRAE…ETGA and FAAE…PATK. Residues Cys-21, Cys-24, His-53, Cys-56, Cys-125, Cys-128, His-159, and Cys-162 each coordinate Zn(2+). The segment at 198 to 235 is disordered; that stretch reads QLPATKTEGKRKGEEVDGNVVAKKKSRKEKEKESKQEK. 2 consecutive short sequence motifs (nuclear localization signal) follow at residues 207-209 and 220-225; these read KRK and KKKSRK. The region spanning 224 to 358 is the PADR1 zinc-binding domain; it reads RKEKEKESKQ…CKKQDRIFPP (135 aa). Residues 225 to 235 show a composition bias toward basic and acidic residues; the sequence is KEKEKESKQEK. The interval 289 to 331 is zinc ribbon; the sequence is GALLPCEECKGQFVFKSDAYYCSGDITAWTKCVAKTQTPNRKD. Zn(2+) is bound by residues Cys-294, Cys-297, Cys-310, and Cys-320. A disordered region spans residues 359–378; that stretch reads EAATVNSAPPPPASAPLTET. The interval 371–522 is automodification domain; it reads ASAPLTETVT…PSKSEKKMKL (152 aa). A BRCT domain is found at 382-473; that stretch reads PQDKPLTNMK…KGFQELLSLH (92 aa). Residues Glu-403, Glu-404, Glu-410, Glu-411, Glu-432, Glu-434, Glu-441, Glu-442, Glu-453, Glu-454, Glu-468, Glu-481, Glu-485, Glu-488, Glu-509, Glu-510, and Glu-517 each carry the polyADP-ribosyl glutamic acid modification. A disordered region spans residues 496-519; it reads SKPANMKSAGKVKEEQGPSKSEKK. Over residues 506 to 519 the composition is skewed to basic and acidic residues; it reads KVKEEQGPSKSEKK. The WGR domain occupies 539–635; it reads SAHVFEKGGK…KNFTKYPKKF (97 aa). The PARP alpha-helical domain maps to 659–776; sequence KSKLAKPIQD…DIEVAYSLLR (118 aa). Positions 785 to 1011 constitute a PARP catalytic domain; sequence DPIDINYEKL…LKFNYKTSLW (227 aa). NAD(+) contacts are provided by residues 859 to 861, Gly-868, Arg-875, and Ser-901; that span reads HGS. The active-site For poly [ADP-ribose] polymerase activity is the Glu-985.

It belongs to the ARTD/PARP family. In terms of assembly, homodimer; PARP-type zinc-fingers from separate parp1 molecules form a dimer module that specifically recognizes DNA strand breaks. Poly-ADP-ribosylated on serine, glutamate and aspartate residues by autocatalysis. Auto-ADP-ribosylation on serine takes place following interaction with HPF1. Auto poly-ADP-ribosylation on serine residues promotes its dissociation from chromatin.

The protein localises to the chromosome. It localises to the nucleus. The protein resides in the nucleolus. It is found in the cytoplasm. Its subcellular location is the cytosol. It carries out the reaction NAD(+) + (ADP-D-ribosyl)n-acceptor = nicotinamide + (ADP-D-ribosyl)n+1-acceptor + H(+).. The catalysed reaction is L-seryl-[protein] + NAD(+) = O-(ADP-D-ribosyl)-L-seryl-[protein] + nicotinamide + H(+). It catalyses the reaction L-aspartyl-[protein] + NAD(+) = 4-O-(ADP-D-ribosyl)-L-aspartyl-[protein] + nicotinamide. The enzyme catalyses L-glutamyl-[protein] + NAD(+) = 5-O-(ADP-D-ribosyl)-L-glutamyl-[protein] + nicotinamide. It carries out the reaction L-tyrosyl-[protein] + NAD(+) = O-(ADP-D-ribosyl)-L-tyrosyl-[protein] + nicotinamide + H(+). The catalysed reaction is L-histidyl-[protein] + NAD(+) = N(tele)-(ADP-D-ribosyl)-L-histidyl-[protein] + nicotinamide + H(+). ADP-ribosyltransferase activity is regulated via an allosteric activation mechanism. In absence of activation signal, parp1 is autoinhibited by the PARP alpha-helical domain (also named HD region), which prevents effective NAD(+)-binding. Activity is highly stimulated by signals, such as DNA strand breaks. Binding to damaged DNA unfolds the PARP alpha-helical domain, relieving autoinhibition. Poly-ADP-ribosyltransferase activity is tightly regulated and parp1 is removed from damaged chromatin following initial poly-ADP-ribosylation of chromatin to avoid prolonged residence (trapping) that has cytotoxic consequences. A number of factors or post-translational modifications (auto-poly-ADP-ribosylation) promote parp1 removal from chromatin. Poly-ADP-ribosyltransferase that mediates poly-ADP-ribosylation of proteins and plays a key role in DNA repair. Mediates glutamate, aspartate, serine, histidine or tyrosine ADP-ribosylation of proteins: the ADP-D-ribosyl group of NAD(+) is transferred to the acceptor carboxyl group of target residues and further ADP-ribosyl groups are transferred to the 2'-position of the terminal adenosine moiety, building up a polymer with an average chain length of 20-30 units. Serine ADP-ribosylation of proteins constitutes the primary form of ADP-ribosylation of proteins in response to DNA damage. Specificity for the different amino acids is conferred by interacting factors, such as hpf1 and nmnat1. Following interaction with hpf1, catalyzes serine ADP-ribosylation of target proteins; hpf1 confers serine specificity by completing the parp1 active site. Also catalyzes tyrosine ADP-ribosylation of target proteins following interaction with hpf1. Following interaction with nmnat1, catalyzes glutamate and aspartate ADP-ribosylation of target proteins; nmnat1 confers glutamate and aspartate specificity. Parp1 initiates the repair of DNA breaks: recognizes and binds DNA breaks within chromatin and recruits hpf1, licensing serine ADP-ribosylation of target proteins, such as histones (H2BS6ADPr and H3S10ADPr), thereby promoting decompaction of chromatin and the recruitment of repair factors leading to the reparation of DNA strand breaks. In addition to base excision repair (BER) pathway, also involved in double-strand breaks (DSBs) repair. Mediates the poly-ADP-ribosylation of a number of proteins. In addition to proteins, also able to ADP-ribosylate DNA: catalyzes ADP-ribosylation of DNA strand break termini containing terminal phosphates and a 2'-OH group in single- and double-stranded DNA, respectively. Parp1-mediated DNA repair in neurons plays a role in sleep: senses DNA damage in neurons and promotes sleep, facilitating efficient DNA repair. In addition to DNA repair, also involved in other processes, such as transcription regulation, programmed cell death, membrane repair, adipogenesis and innate immunity. Acts as a repressor of transcription: binds to nucleosomes and modulates chromatin structure in a manner similar to histone H1, thereby altering RNA polymerase II. Acts both as a positive and negative regulator of transcription elongation, depending on the context. Poly-ADP-ribose chains generated by parp1 also play a role in poly-ADP-ribose-dependent cell death, a process named parthanatos. Also acts as a negative regulator of the cGAS-STING pathway by mediating poly-ADP-ribosylation and inactivation of cgas. Acts as a negative regulator of adipogenesis by catalyzing poly ADP-ribosylation of histone H2B on 'Glu-35' (H2BE35ADPr). The protein is Poly [ADP-ribose] polymerase 1 (PARP1) of Gallus gallus (Chicken).